We begin with the raw amino-acid sequence, 320 residues long: Serpentine receptor class delta-28 (320 aa).

7 helical membrane passes run 5–25, 38–58, 83–103, 122–142, 176–196, 230–250, and 258–278; these read LLHTVLSVVGVSLNAFMMYLA, AIITIKTFTDILTSAMSFFVM, ACYIGHMFMLCFLECNLIWMI, SLVFVAICLSIPSFIHMATWI, LTLIIQLFITSILVLIAYAWI, FLPSFIFLGVFVFVGMFTQLI, and LVSVIFMFSPICSPFSYILFV.

Belongs to the nematode receptor-like protein srd family.

The protein localises to the membrane. This is Serpentine receptor class delta-28 (srd-28) from Caenorhabditis elegans.